We begin with the raw amino-acid sequence, 184 residues long: Isopentenyl-diphosphate Delta-isomerase (184 aa).

Positions 25 and 32 each coordinate Mn(2+). The Nudix hydrolase domain occupies 30-164; sequence PLHLAFSCWL…PWAFSPWMVL (135 aa). Cys-67 is an active-site residue. His-69 is a Mn(2+) binding site. Glu-87 contacts Mg(2+). Mn(2+) is bound by residues Glu-114 and Glu-116. Glu-116 is an active-site residue.

This sequence belongs to the IPP isomerase type 1 family. Homodimer. Mg(2+) is required as a cofactor. Mn(2+) serves as cofactor.

The protein localises to the cytoplasm. It catalyses the reaction isopentenyl diphosphate = dimethylallyl diphosphate. It participates in isoprenoid biosynthesis; dimethylallyl diphosphate biosynthesis; dimethylallyl diphosphate from isopentenyl diphosphate: step 1/1. Its function is as follows. Catalyzes the 1,3-allylic rearrangement of the homoallylic substrate isopentenyl (IPP) to its highly electrophilic allylic isomer, dimethylallyl diphosphate (DMAPP). This chain is Isopentenyl-diphosphate Delta-isomerase, found in Klebsiella pneumoniae subsp. pneumoniae (strain ATCC 700721 / MGH 78578).